A 263-amino-acid polypeptide reads, in one-letter code: MNISRVLFAVVLVLTVSTYECRPRGRILGGQDSKEKTWPFMASIQKNEVHQCGGVLISDKWVLSAAHCATDSNNSSLHVMLGAISLTKPEQYKIVLKVEREIPHPLYNSTKKHHDLLLLELSEKVTLSEAVKPLPFETENIDIPDGKRCLVAGWGQMKSTGKKPDTLQELWIPVISRDVCNRRNYYDNEITPNMICAIEAKKDSCEGDSGGPLVCDGIAVAIVQGGYRRCGLSKKPGIYTLIAPYKSWIMETMYNATLLPSPL.

A signal peptide spans 1–21; that stretch reads MNISRVLFAVVLVLTVSTYEC. N-linked (GlcNAc...) asparagine glycosylation occurs at N2. Positions 22–26 are cleaved as a propeptide — activation peptide; it reads RPRGR. One can recognise a Peptidase S1 domain in the interval 27 to 254; sequence ILGGQDSKEK…YKSWIMETMY (228 aa). A disulfide bridge links C52 with C68. The active-site Charge relay system is the H67. 3 N-linked (GlcNAc...) asparagine glycosylation sites follow: N73, N74, and N108. Catalysis depends on D115, which acts as the Charge relay system. 3 disulfides stabilise this stretch: C149/C215, C180/C196, and C205/C230. Catalysis depends on S209, which acts as the Charge relay system. N255 carries N-linked (GlcNAc...) asparagine glycosylation.

Belongs to the peptidase S1 family. In terms of tissue distribution, in the embryo, localizes to paraxial regions at the neurula stage and anterior ventral regions at the tailbud stage. From the late tailbud to tadpole stage, expressed along the forming blood vessels including the anterior cardinal veins, posterior cardinal veins, intersomitic veins, dorsal longitudinal anastomosing vessel, dorsal aorta, pronephric sinus and most prominently around the vascular vitelline network, where expression shows left-right asymmetry in the stage 42 embryo. Localizes to endothelial cells. In adults, shows highest expression in liver with moderate levels of expression in the fat body, lung, gut and vessels. Weakly expressed in adult heart, muscle, testis and ovary.

The protein localises to the secreted. In terms of biological role, probable serine protease. This is Serine protease ami from Xenopus laevis (African clawed frog).